The chain runs to 197 residues: Putative NADH dehydrogenase/NAD(P)H nitroreductase Plav_3612 (197 aa).

Belongs to the nitroreductase family. HadB/RutE subfamily. It depends on FMN as a cofactor.

The sequence is that of Putative NADH dehydrogenase/NAD(P)H nitroreductase Plav_3612 from Parvibaculum lavamentivorans (strain DS-1 / DSM 13023 / NCIMB 13966).